We begin with the raw amino-acid sequence, 280 residues long: Small ribosomal subunit protein uS3 (280 aa).

The KH type-2 domain maps to I38–R106. The tract at residues A215–S280 is disordered. The span at S238–S280 shows a compositional bias: low complexity.

It belongs to the universal ribosomal protein uS3 family. Part of the 30S ribosomal subunit. Forms a tight complex with proteins S10 and S14.

Functionally, binds the lower part of the 30S subunit head. Binds mRNA in the 70S ribosome, positioning it for translation. This is Small ribosomal subunit protein uS3 from Mycolicibacterium paratuberculosis (strain ATCC BAA-968 / K-10) (Mycobacterium paratuberculosis).